The following is a 387-amino-acid chain: Galactokinase (387 aa).

Residue 36-39 coordinates substrate; sequence EHTD. Residues S70 and 125–131 contribute to the ATP site; that span reads GAGLSSS. The Mg(2+) site is built by S131 and E163. The active-site Proton acceptor is the D175. Residue Y227 participates in substrate binding.

This sequence belongs to the GHMP kinase family. GalK subfamily.

The protein localises to the cytoplasm. The catalysed reaction is alpha-D-galactose + ATP = alpha-D-galactose 1-phosphate + ADP + H(+). The protein operates within carbohydrate metabolism; galactose metabolism. Functionally, catalyzes the transfer of the gamma-phosphate of ATP to D-galactose to form alpha-D-galactose-1-phosphate (Gal-1-P). This is Galactokinase from Streptomyces coelicolor (strain ATCC BAA-471 / A3(2) / M145).